Consider the following 260-residue polypeptide: NH(3)-dependent NAD(+) synthetase (260 aa).

An ATP-binding site is contributed by 31–38 (GLSGGLDS). Mg(2+) is bound at residue D37. Residue R112 coordinates deamido-NAD(+). An ATP-binding site is contributed by T132. Position 137 (E137) interacts with Mg(2+). ATP contacts are provided by K161 and S183.

It belongs to the NAD synthetase family. As to quaternary structure, homodimer.

The enzyme catalyses deamido-NAD(+) + NH4(+) + ATP = AMP + diphosphate + NAD(+) + H(+). It participates in cofactor biosynthesis; NAD(+) biosynthesis; NAD(+) from deamido-NAD(+) (ammonia route): step 1/1. Functionally, catalyzes the ATP-dependent amidation of deamido-NAD to form NAD. Uses ammonia as a nitrogen source. This chain is NH(3)-dependent NAD(+) synthetase, found in Helicobacter pylori (strain G27).